The following is a 420-amino-acid chain: Subtilisin-like protease 7 (420 aa).

An N-terminal signal peptide occupies residues 1 to 20 (MGFITKAIPLALAAASVING). The propeptide occupies 21–119 (AEIMETRAGV…IERDARVQIN (99 aa)). An Inhibitor I9 domain is found at 36-118 (KYIVVMNDGM…YIERDARVQI (83 aa)). A Peptidase S8 domain is found at 129-413 (SWGLARVGSK…SFPLNIYEEQ (285 aa)). Active-site charge relay system residues include D161 and H192. N222 and N252 each carry an N-linked (GlcNAc...) asparagine glycan. S346 (charge relay system) is an active-site residue. N396 carries N-linked (GlcNAc...) asparagine glycosylation.

The protein belongs to the peptidase S8 family.

The protein localises to the secreted. Its function is as follows. Secreted subtilisin-like serine protease with keratinolytic activity that contributes to pathogenicity. The chain is Subtilisin-like protease 7 (SUB7) from Arthroderma benhamiae (strain ATCC MYA-4681 / CBS 112371) (Trichophyton mentagrophytes).